Here is a 327-residue protein sequence, read N- to C-terminus: Malate dehydrogenase (327 aa).

NAD(+) is bound by residues 20–25 (GAGRVG) and D44. Substrate contacts are provided by R93 and R99. NAD(+)-binding positions include N106 and 129-131 (VTN). Substrate-binding residues include N131 and R162. H186 (proton acceptor) is an active-site residue.

Belongs to the LDH/MDH superfamily. MDH type 3 family.

The catalysed reaction is (S)-malate + NAD(+) = oxaloacetate + NADH + H(+). Functionally, catalyzes the reversible oxidation of malate to oxaloacetate. The protein is Malate dehydrogenase of Nostoc punctiforme (strain ATCC 29133 / PCC 73102).